The following is a 464-amino-acid chain: Soluble pyridine nucleotide transhydrogenase (464 aa).

35–44 (DSRRVVGGNC) is a binding site for FAD.

The protein belongs to the class-I pyridine nucleotide-disulfide oxidoreductase family. FAD is required as a cofactor.

It is found in the cytoplasm. The enzyme catalyses NAD(+) + NADPH = NADH + NADP(+). Functionally, conversion of NADPH, generated by peripheral catabolic pathways, to NADH, which can enter the respiratory chain for energy generation. The polypeptide is Soluble pyridine nucleotide transhydrogenase (Pseudomonas aeruginosa (strain LESB58)).